Here is a 141-residue protein sequence, read N- to C-terminus: Hemoglobin subunit alpha (141 aa).

The 141-residue stretch at 1–141 folds into the Globin domain; the sequence is VLSPADKSNV…VSTVLVSKYR (141 aa). Position 3 is a phosphoserine (Ser3). 2 positions are modified to N6-succinyllysine: Lys7 and Lys11. Lys16 bears the N6-acetyllysine; alternate mark. Lys16 carries the N6-succinyllysine; alternate modification. Residue Tyr24 is modified to Phosphotyrosine. Ser35 bears the Phosphoserine mark. Position 40 is an N6-succinyllysine (Lys40). At Ser49 the chain carries Phosphoserine. His58 provides a ligand contact to O2. His87 contacts heme b. Ser102 carries the phosphoserine modification. Thr108 is modified (phosphothreonine). Position 124 is a phosphoserine (Ser124). Thr134 bears the Phosphothreonine mark. Ser138 is modified (phosphoserine).

Belongs to the globin family. As to quaternary structure, heterotetramer of two alpha chains and two beta chains. Red blood cells.

Functionally, involved in oxygen transport from the lung to the various peripheral tissues. In terms of biological role, hemopressin acts as an antagonist peptide of the cannabinoid receptor CNR1. Hemopressin-binding efficiently blocks cannabinoid receptor CNR1 and subsequent signaling. The polypeptide is Hemoglobin subunit alpha (HBA) (Chalinolobus morio (Chocolate-wattled bat)).